Reading from the N-terminus, the 510-residue chain is Probable serine/threonine-protein kinase 2 (510 aa).

One can recognise a Protein kinase domain in the interval 111–364 (YVLNKKIGKG…ALQALGHQWF (254 aa)). ATP-binding positions include 117-125 (IGKGSFSTA) and Lys140. Asp230 functions as the Proton acceptor in the catalytic mechanism. The disordered stretch occupies residues 408-428 (NDDIYNNNNNNNQLDPNKNHK).

This sequence belongs to the protein kinase superfamily. Ser/Thr protein kinase family.

It localises to the membrane. It carries out the reaction L-seryl-[protein] + ATP = O-phospho-L-seryl-[protein] + ADP + H(+). The catalysed reaction is L-threonyl-[protein] + ATP = O-phospho-L-threonyl-[protein] + ADP + H(+). The chain is Probable serine/threonine-protein kinase 2 (PK2) from Plasmodium falciparum (isolate K1 / Thailand).